We begin with the raw amino-acid sequence, 113 residues long: Heavy metal-associated isoprenylated plant protein 15 (113 aa).

One can recognise an HMA domain in the interval methionine 1 to tyrosine 65. A coiled-coil region spans residues aspartate 69–glutamate 89. The residue at position 110 (cysteine 110) is a Cysteine methyl ester. Cysteine 110 is lipidated: S-farnesyl cysteine. Residues valine 111–cysteine 113 constitute a propeptide, removed in mature form.

It belongs to the HIPP family. In terms of tissue distribution, expressed in embryo sacs.

Its function is as follows. Probable heavy-metal-binding protein. The chain is Heavy metal-associated isoprenylated plant protein 15 from Arabidopsis thaliana (Mouse-ear cress).